The sequence spans 128 residues: Fluoride-specific ion channel FluC (128 aa).

The next 4 membrane-spanning stretches (helical) occupy residues 5–25 (IVAI…LSLA), 35–55 (LGTL…AVVF), 67–87 (LFVI…SVEV), and 96–116 (FGWA…LTAL). The Na(+) site is built by Gly-75 and Thr-78.

Belongs to the fluoride channel Fluc/FEX (TC 1.A.43) family.

Its subcellular location is the cell inner membrane. The catalysed reaction is fluoride(in) = fluoride(out). Its activity is regulated as follows. Na(+) is not transported, but it plays an essential structural role and its presence is essential for fluoride channel function. Functionally, fluoride-specific ion channel. Important for reducing fluoride concentration in the cell, thus reducing its toxicity. The chain is Fluoride-specific ion channel FluC from Burkholderia lata (strain ATCC 17760 / DSM 23089 / LMG 22485 / NCIMB 9086 / R18194 / 383).